Reading from the N-terminus, the 94-residue chain is Large ribosomal subunit protein bL25 (94 aa).

The protein belongs to the bacterial ribosomal protein bL25 family. Part of the 50S ribosomal subunit; part of the 5S rRNA/L5/L18/L25 subcomplex. Contacts the 5S rRNA. Binds to the 5S rRNA independently of L5 and L18.

Functionally, this is one of the proteins that binds to the 5S RNA in the ribosome where it forms part of the central protuberance. The protein is Large ribosomal subunit protein bL25 of Escherichia coli O6:K15:H31 (strain 536 / UPEC).